Consider the following 451-residue polypeptide: Phosphoglucosamine mutase (451 aa).

Catalysis depends on S102, which acts as the Phosphoserine intermediate. Mg(2+) is bound by residues S102, D243, D245, and D247. S102 carries the phosphoserine modification.

The protein belongs to the phosphohexose mutase family. The cofactor is Mg(2+). Activated by phosphorylation.

The enzyme catalyses alpha-D-glucosamine 1-phosphate = D-glucosamine 6-phosphate. Catalyzes the conversion of glucosamine-6-phosphate to glucosamine-1-phosphate. This Chelativorans sp. (strain BNC1) protein is Phosphoglucosamine mutase.